A 427-amino-acid polypeptide reads, in one-letter code: Glucan 1,3-beta-glucosidase 2 (427 aa).

The first 17 residues, 1 to 17 (MLISTFIISSLLSIALA), serve as a signal peptide directing secretion. The Proton donor role is filled by E217. Disulfide bonds link C299–C426 and C324–C355. E316 (nucleophile) is an active-site residue.

Belongs to the glycosyl hydrolase 5 (cellulase A) family.

The protein localises to the secreted. It carries out the reaction Successive hydrolysis of beta-D-glucose units from the non-reducing ends of (1-&gt;3)-beta-D-glucans, releasing alpha-glucose.. Its function is as follows. Beta-glucanases participate in the metabolism of beta-glucan, the main structural component of the cell wall. It could also function biosynthetically as a transglycosylase. This is Glucan 1,3-beta-glucosidase 2 (EXG2) from Wickerhamomyces anomalus (Yeast).